A 3625-amino-acid chain; its full sequence is MVNNMSLLFLWSLVIFLTFAESYGEAGGPELQRHKRNTELQQPRMAAERGNLVFFTGLAQNIEFRTGSQGKIKLNDEDVGECLRQIQKNKFDIMNLKRGIIGLPQNVSSQIHQLESKLVDLERRFQSLQLTVDGKVCSSNPCQNGATCLNLHDSFFCICPSQWKGPLCSDDVNECEIYSGTPLGCQNGATCINTPGSYSCLCSPETHGPQCASKYDDCEGGSEMRCVHGICEDLTRVQAGEPRFRCICHAGWTSPSNSTACTLDRDECSSWPAPCSALVPCFNTLGSFYCGACPTGWQGNGYICEDINECEINNGGCSVAPPVECVNTPGSYYCPSCPPGYQGDGRMCTLIDLCSVNNGGCHPHAACSLILGSLPLCTCLPGYTGNGYGLHGCVPLSNVCLTRPCLHGQCMETASGYVCNCDSGWAGMNCTENINECLSNPCLNGGTCVDGINAFSCECTRFWTGSLCHLPQQVCGGTMSDVSGSFSYMSPDVGYVHDVDCFWVLRTEEGKVLRITFTFFQLESVDNCPHEFLQIHDGDSPAAFPLGRFCGSSPPHELLSSDNALYFHFFSEHLRNERGFTIRWETRQPECGGVLTGTYGSLKSPGYPGKYPPGRDCVWKVIASPDLLITFTFGTLSLEHHDDCRKDYLEIRDGPLHQDPVLGKFCTSLSVPPLQTTGPFARIHFHSDNQINDQGFHITYLTTPSDLHCGGNFTDPEGLLSPDLSGPFTHSRQCIYVITQPLGEQIQVNFTHVELEGQSGCSQSYIEVRDDQTLLGKVCGNETPSHIKSITNSIWIRLKIDASVVRASFGAAYQVACGGELTGEGVIRSPFYPNVYPGERICRWTIHQPQSQVVLLNFTAFEMGSSAHCDTDYIEIGSSPVLGSPENKKYCGTDIPSFITSVYNSLHVVFVKSSSTENHGFMAKFSTEALACGEILTESSGIIQSPGHPNIYPHGVNCTWHILVQPGHLIHLEIRQFHLEFHYNCTRDYLEIYDTVSDTSLGRYCGKSIPPSLTSNTNSLKLIFVADADLAYEGFVINYEATDASAGNTTALLYRRIWIFTSPNFPSNYPNNMECIYRITVETSQQIALHFTDFSLEEPIGGACAADYVEITNGGYASSPPLGKYCGSNPPPRIISHSNKLWLKFKSDFFGSGPGFSAYWDGSLTGCGGNLTTPTGTFTSPNYPMPYYHSSECFWWLKSSHGSPFELEFNDFHLEYHPNCTLDYLDVYDGLSTSSHLLTRLCGNEKPPLIRSTGDSMSLKLRTDEGQQGGGFLVKYQQTCDNVVIVNRTYGILESIHYPKPYSVNQRCNWTIQATAGNTVNYTFLAFELESHANCSTDYLELYDGPQRMGRFCGAVIPPSGSTTGSRLQVLFHTDGVGQGERGFQMQWLVHGCGGELSGDTGTFSSPGYPVGYPANKECIWYIHSSPGSSIQLTIHDFDVEYHATCNFDVLEIYGGPDFHSPRIAQLCVQRSAENPMQVSSTGNELALRFKTDSSVNGRGFNVSWRAVPGGCGGIFQAPSGEIHSPNYPSPYRSNTECTWLIQVEKNHRVLLNFTDFDLEPQDSCIMAFDGLSSATARLVGVCGRQQLSNPIISTGSSLFVRFQSGPSRQSRGFRAQFRQACGGHILTDSFDTISSPRFPASYPNNQNCSWIIQAQPPFNHITLSFSHFGLESSSTCTRDFVEILDGSHSDAPLRGRYCGSSMPHPITSFGNALMLRFVSDSSVNFDGFHATYVASTSACGGIFHMAEGIFNSPGYPEVYPSNVECVWNIASSPGNQLQLSFITFQLEDSRDCSRDFVEIREGNATGRLVGRYCGNVLPLNYSSIIGHDLWIKFVSDGSGSGVGFQAAFNNIFGNDHIVGTHGKVASPLWPRNYPHNSNYQWIVNVNESQVIHGRILEMDVEGTFNCYYDKLRIYDGADIHSRLIGTYCGAQTESFSSTGSSLTFQFSSDSSISGRGFLLEWFAMDASDGPLPTIATGACGGFLRTGDAPVFLYSPGWPGSYSNGADCMWLIQAPDSTVELNILSLDIESHRTCDYDKLVIRDGDNNMAQELAVLCGREIPGPIRSTGEYMTIRFTSDFSVTRAGFNASFHKSCGGYLHADRGIITSPGYPEAYTSNLNCSWHVQVQQGLSIAVHFEQPFQVSNRDAFCNQGDYLVLKNGPDIYSPPLGPHGGNGRFCGSRPSSTLFTSDNELFVQFISDNSNEGQGFKITYEAKSLACGGNIYIHDADSSGYVASPNHPDNYPQHADCIWVIAAPSGRPIRLEFEDQFSIEITPNCTSSYLELRDGADSNAPVLAKFCGTSLPPSQLSSGEVMYLRFRSDNSPTHAGFKAKYSIAQCGGTVTGQSGVIESSGYPALPYANNLFCEWRLQGLSGHYLTIHFEDFNLQNSSGCERDFVEIWENHTSGNLLGRYCGNTVPDSIDTSGNVALVRFVTDGFLTASGFRLRFDSSMEGCGGDLQGPTGTFTAPNYLNPNPHGWMCEWRITVQEGRRVTLTLNDLRLEAHPFCNSEHVAVFNGIRSNSPQLEKRCSSVNGSNEIRSSGNTMKVVYFTDGSRPYGGFTASYTSSEDAVCGGSLTNSPEGNFTSPGYDGTRNYSRNLNCEWTLSNSNQGNSSIYIDFEDFYLESHQDCQFDVLEFRVDNADGLLIWRLCGSSKPTMPLVIPYPQVWIHFVTNERVEHIGFRARYSFTDCGGIQIGDHGVISSPNYPASYDSLTHCSWLLEAPQGHTITLTFSDFDIEAHASCAWDSVTVRNGGSPGSPIIGHYCGSSNPRTIQSGSNQLVVIFNTDSSVQNGGFYATWNTETSGCGGILHSDTGTIRSPHWPQNFPENSRCSWTVITHPSKHLEISFDNNFLIPSGDSQCLNSFVKVWAGTQEADKDLLATSCGNVSPGRIITPRNAFTAVFQSQETPAQGFSASFLSRCGRNFTNPSGYIVSPNYPKQYDNNMNCTYIIEASPLSVILLKVVSFHLEARSTVSGSCDSDGVHIIRGHSLSSTPLVTLCGDEALSPVTISGPVLLNFYSNAHTTDFGFKFSYRITPCGGTFNLSFGIIKSPSYSYSNYPNDMHCLYTVTVRDDRVIQLKFNDFDLVPSTFCSQDYLEIYDGSNISDPLLGKFCGSTLPPNVKSSNNTMFLVFKTDSVHTARGWKISFRETLGPQQGCGGYLTGSTHTFGSPDSDSNGRYDKNLNCIWFITAPVNKLIKLTFSTFALEAATSLQRCIYDYVKLYDGDSENANLAGTFCGSTVPAPFISSGNFLTVQFVSDSSLEREGFNATYTLLDMPCGGTYNATWTSQSIWSPSSSDPDVPLTTCTWVIEAPLHQQVEITVWTFQLHSQDCDQNYLEFRDPPERNGNPGIRFCGRNASAVPTFYSSLSTAIIIFKSEVFNTDSRVGFTYRIAGCSREYQKAFGRLRSPGWPAGYASDADCAVVLRAPQNHTISLFFHAFGLEDSGGCTRDFLEVRNGSESTSPLLGKYCGTLLPNPIFSQSRDLYLRFKSDSATSGRGYEIIWTSSPSGCGGTLYGDSGLVTSPGYPGTYPNHTHCEWVIIAPGGRPVTVSFSFISIDDPGECVQNYLMLYDGPDANSPSSGPYCGADTDVAPFAASSHRVFIRFHAEAAARPSALRLTWAS.

Positions 1–20 (MVNNMSLLFLWSLVIFLTFA) are cleaved as a signal peptide. Positions 21-36 (ESYGEAGGPELQRHKR) are cleaved as a propeptide — removed in mature form. Residues 43 to 50 (PRMAAERG) are interaction with AMN. N-linked (GlcNAc...) asparagine glycosylation occurs at asparagine 106. Residues 133-169 (DGKVCSSNPCQNGATCLNLHDSFFCICPSQWKGPLCS) enclose the EGF-like 1 domain. 6 disulfide bridges follow: cysteine 137/cysteine 148, cysteine 142/cysteine 157, cysteine 159/cysteine 168, cysteine 175/cysteine 191, cysteine 185/cysteine 200, and cysteine 202/cysteine 211. The EGF-like 2; calcium-binding domain occupies 171–212 (DVNECEIYSGTPLGCQNGATCINTPGSYSCLCSPETHGPQCA). A glycan (N-linked (GlcNAc...) asparagine) is linked at asparagine 257. Residues 264-305 (DRDECSSWPAPCSALVPCFNTLGSFYCGACPTGWQGNGYICE) enclose the EGF-like 3; calcium-binding domain. 20 cysteine pairs are disulfide-bonded: cysteine 268-cysteine 281, cysteine 275-cysteine 290, cysteine 293-cysteine 304, cysteine 310-cysteine 325, cysteine 317-cysteine 334, cysteine 337-cysteine 348, cysteine 354-cysteine 367, cysteine 361-cysteine 377, cysteine 379-cysteine 393, cysteine 400-cysteine 410, cysteine 405-cysteine 419, cysteine 421-cysteine 430, cysteine 437-cysteine 448, cysteine 442-cysteine 457, cysteine 459-cysteine 468, cysteine 475-cysteine 501, cysteine 528-cysteine 550, cysteine 591-cysteine 617, cysteine 644-cysteine 666, and cysteine 709-cysteine 734. The region spanning 306-349 (DINECEINNGGCSVAPPVECVNTPGSYYCPSCPPGYQGDGRMCT) is the EGF-like 4; calcium-binding domain. EGF-like domains are found at residues 350 to 394 (LIDL…HGCV) and 396 to 431 (LSNV…MNCT). Residue asparagine 429 is glycosylated (N-linked (GlcNAc...) asparagine). One can recognise an EGF-like 7; calcium-binding domain in the interval 433–469 (NINECLSNPCLNGGTCVDGINAFSCECTRFWTGSLCH). CUB domains are found at residues 475 to 587 (CGGT…WETR), 591 to 703 (CGGV…YLTT), 709 to 816 (CGGN…YQVA), 817 to 928 (CGGE…FSTE), 932 to 1042 (CGEI…YEAT), 1045 to 1163 (SAGN…WDGS), 1167 to 1279 (CGGN…YQQT), 1280 to 1391 (CDNV…WLVH), 1393 to 1508 (CGGE…WRAV), 1512 to 1621 (CGGI…FRQA), 1622 to 1736 (CGGH…YVAS), 1740 to 1852 (CGGI…FNNI), 1854 to 1965 (GNDH…WFAM), 1980 to 2093 (CGGF…FHKS), 2094 to 2215 (CGGY…YEAK), 2219 to 2336 (CGGN…YSIA), 2338 to 2450 (CGGT…FDSS), 2454 to 2567 (CGGD…YTSS), 2572 to 2689 (CGGS…YSFT), 2691 to 2803 (CGGI…WNTE), 2807 to 2921 (CGGI…FLSR), 2922 to 3037 (CGRN…YRIT), 3039 to 3152 (CGGT…FRET), 3159 to 3276 (CGGY…YTLL), 3280 to 3397 (CGGT…IAGC), 3397 to 3509 (CSRE…WTSS), and 3513 to 3625 (CGGT…TWAS). N-linked (GlcNAc...) asparagine glycans are attached at residues asparagine 712 and asparagine 749. Cysteine 761 and cysteine 779 are oxidised to a cystine. Asparagine 781 carries an N-linked (GlcNAc...) asparagine glycan. Cysteine 817 and cysteine 842 are oxidised to a cystine. Asparagine 857 is a glycosylation site (N-linked (GlcNAc...) asparagine). Cystine bridges form between cysteine 869–cysteine 891 and cysteine 932–cysteine 958. A glycan (N-linked (GlcNAc...) asparagine) is linked at asparagine 957. Glutamate 980 is a Ca(2+) binding site. N-linked (GlcNAc...) asparagine glycosylation is present at asparagine 984. Cysteine 985 and cysteine 1005 form a disulfide bridge. Positions 988, 1027, 1029, and 1030 each coordinate Ca(2+). N-linked (GlcNAc...) asparagine glycosylation is present at asparagine 1048. Ca(2+) contacts are provided by glutamate 1097, aspartate 1107, and aspartate 1148. Cysteine 1104 and cysteine 1126 are disulfide-bonded. Cysteine 1167 and cysteine 1193 are joined by a disulfide. Asparagine 1170 carries N-linked (GlcNAc...) asparagine glycosylation. Glutamate 1215 lines the Ca(2+) pocket. An N-linked (GlcNAc...) asparagine glycan is attached at asparagine 1219. The cysteines at positions 1220 and 1242 are disulfide-linked. Residues aspartate 1223, aspartate 1264, glycine 1266, and glutamine 1267 each contribute to the Ca(2+) site. Cysteine 1280 and cysteine 1308 form a disulfide bridge. N-linked (GlcNAc...) asparagine glycans are attached at residues asparagine 1287, asparagine 1309, and asparagine 1321. Ca(2+) is bound at residue glutamate 1330. Residue asparagine 1334 is glycosylated (N-linked (GlcNAc...) asparagine). An intrachain disulfide couples cysteine 1335 to cysteine 1353. Residues aspartate 1338, aspartate 1375, and valine 1377 each contribute to the Ca(2+) site. 2 disulfide bridges follow: cysteine 1393–cysteine 1419 and cysteine 1446–cysteine 1468. Asparagine 1502 is a glycosylation site (N-linked (GlcNAc...) asparagine). A disulfide bridge links cysteine 1512 with cysteine 1538. The N-linked (GlcNAc...) asparagine glycan is linked to asparagine 1553. Intrachain disulfides connect cysteine 1565-cysteine 1583, cysteine 1622-cysteine 1649, cysteine 1677-cysteine 1699, cysteine 1740-cysteine 1766, and cysteine 1793-cysteine 1814. An N-linked (GlcNAc...) asparagine glycan is attached at asparagine 1648. Asparagine 1804, asparagine 1821, and asparagine 1887 each carry an N-linked (GlcNAc...) asparagine glycan. 3 cysteine pairs are disulfide-bonded: cysteine 1907/cysteine 1929, cysteine 1980/cysteine 2008, and cysteine 2034/cysteine 2056. N-linked (GlcNAc...) asparagine glycans are attached at residues asparagine 2087 and asparagine 2119. 2 cysteine pairs are disulfide-bonded: cysteine 2094–cysteine 2120 and cysteine 2219–cysteine 2249. N-linked (GlcNAc...) asparagine glycosylation is present at asparagine 2276. 2 disulfide bridges follow: cysteine 2277-cysteine 2299 and cysteine 2338-cysteine 2365. 2 N-linked (GlcNAc...) asparagine glycosylation sites follow: asparagine 2388 and asparagine 2402. Intrachain disulfides connect cysteine 2392–cysteine 2413, cysteine 2454–cysteine 2480, and cysteine 2507–cysteine 2529. N-linked (GlcNAc...) asparagine glycans are attached at residues asparagine 2533, asparagine 2583, asparagine 2594, and asparagine 2612. Cysteine 2572 and cysteine 2601 are disulfide-bonded. 5 cysteine pairs are disulfide-bonded: cysteine 2630-cysteine 2651, cysteine 2691-cysteine 2717, cysteine 2744-cysteine 2766, cysteine 2807-cysteine 2833, and cysteine 2862-cysteine 2885. N-linked (GlcNAc...) asparagine glycosylation is found at asparagine 2887, asparagine 2925, asparagine 2928, and asparagine 2947. 2 disulfides stabilise this stretch: cysteine 2922–cysteine 2948 and cysteine 2979–cysteine 3001. Threonine 3010 bears the Phosphothreonine mark. 2 cysteine pairs are disulfide-bonded: cysteine 3039–cysteine 3066 and cysteine 3093–cysteine 3115. Residues asparagine 3044, asparagine 3105, and asparagine 3127 are each glycosylated (N-linked (GlcNAc...) asparagine). 2 disulfide bridges follow: cysteine 3159–cysteine 3187 and cysteine 3217–cysteine 3239. N-linked (GlcNAc...) asparagine glycosylation is found at asparagine 3270 and asparagine 3285. Cystine bridges form between cysteine 3280/cysteine 3308 and cysteine 3334/cysteine 3356. Asparagine 3359 is a glycosylation site (N-linked (GlcNAc...) asparagine). A disulfide bond links cysteine 3397 and cysteine 3423. 3 N-linked (GlcNAc...) asparagine glycosylation sites follow: asparagine 3432, asparagine 3459, and asparagine 3535. Cystine bridges form between cysteine 3450–cysteine 3472, cysteine 3513–cysteine 3539, and cysteine 3566–cysteine 3588.

Interacts with AMN. Component of the cubam complex composed of one CUBN trimer and one AMN chain. The cubam complex can dimerize. Interacts with LRP2 in a dual-receptor complex in a calcium-dependent manner. Found in a complex with PID1/PCLI1, LRP1 and CUBNI. Interacts with LRP1 and PID1/PCLI1. Post-translationally, the precursor is cleaved by a trans-Golgi proteinase furin, removing a propeptide. N-glycosylated. In terms of tissue distribution, detected in kidney cortex (at protein level).

The protein localises to the apical cell membrane. It is found in the cell membrane. Its subcellular location is the membrane. It localises to the coated pit. The protein resides in the endosome. The protein localises to the lysosome membrane. In terms of biological role, endocytic receptor which plays a role in lipoprotein, vitamin and iron metabolism by facilitating their uptake. Acts together with LRP2 to mediate endocytosis of high-density lipoproteins, GC, hemoglobin, ALB, TF and SCGB1A1. Acts together with AMN to mediate endocytosis of the CBLIF-cobalamin complex. Binds to ALB, MB, Kappa and lambda-light chains, TF, hemoglobin, GC, SCGB1A1, APOA1, high density lipoprotein, and the CBLIF-cobalamin complex. Ligand binding requires calcium. Serves as important transporter in several absorptive epithelia, including intestine, renal proximal tubules and embryonic yolk sac. May play an important role in the development of the peri-implantation embryo through internalization of APOA1 and cholesterol. Binds to LGALS3 at the maternal-fetal interface. This is Cubilin (CUBN) from Sus scrofa (Pig).